Here is a 79-residue protein sequence, read N- to C-terminus: Putative antitoxin VapB1 (79 aa).

Antitoxin component of a possible type II toxin-antitoxin (TA) system. The cognate toxin is VapC1. The protein is Putative antitoxin VapB1 (vapB1) of Mycobacterium tuberculosis (strain ATCC 25618 / H37Rv).